The primary structure comprises 614 residues: MEHTPQSQLKLLLAKGKEQGYLTYAEVNDHLPADMVDADQIEDIVQMINDMGIRVYEQAPDADEIMMTEDSTDDDAAEEAAAALATVEAELGRTTDPVRMYMREMGTVELLTREGEIVIAKRIEEGIYTVQASVAEYPPAIASILDQFDRYEAEEVRLSDIISGFIDPNAADIAPTATHIGSDLSQSERDKDDSKDDSKDDDEDEEEEGPKGPDPEESKERFTQLREVHENTLKIIADKGRGHPEATVALFEIGELFKEFRLMPKQFDRLVKNMRATMDKVRVQERLIMKLCVEQAKMPKKNFVKGYTADESSIAWFDTELASKKPYAEGLKMIEPDVRRCRFKLDIIEKETGLAIASIKDINRRMSIGEAKARRAKKEMVEANLRLVISIAKKYTNRGLQFLDLIQEGNIGLMKAVDKFEYRRGYKFSTYATWWIRQAITRSIADQARTIRIPVHMIETINKLNRISRQMLQEMGREPTPEELAERMLMPEDKIRKVLKIAKEPISMETPIGDDEDSHLGDFIEDTTLELPLDSATGESLRNATHEVLAGLTAREAKVLRMRFGIDMNTDHTLEEVGKQFDVTRERIRQIEAKALRKLRHPSRSEILKSFLDE.

The segment at 178-222 (THIGSDLSQSERDKDDSKDDSKDDDEDEEEEGPKGPDPEESKERF) is disordered. Residues 186-198 (QSERDKDDSKDDS) show a composition bias toward basic and acidic residues. Residues 199 to 208 (KDDDEDEEEE) are compositionally biased toward acidic residues. Basic and acidic residues predominate over residues 209–222 (GPKGPDPEESKERF). The interval 380–450 (MVEANLRLVI…TRSIADQART (71 aa)) is sigma-70 factor domain-2. The short motif at 404–407 (DLIQ) is the Interaction with polymerase core subunit RpoC element. The sigma-70 factor domain-3 stretch occupies residues 459–535 (ETINKLNRIS…DTTLELPLDS (77 aa)). The interval 548 to 601 (VLAGLTAREAKVLRMRFGIDMNTDHTLEEVGKQFDVTRERIRQIEAKALRKLRH) is sigma-70 factor domain-4. Positions 574–593 (LEEVGKQFDVTRERIRQIEA) form a DNA-binding region, H-T-H motif.

Belongs to the sigma-70 factor family. RpoD/SigA subfamily. In terms of assembly, interacts transiently with the RNA polymerase catalytic core.

The protein resides in the cytoplasm. Sigma factors are initiation factors that promote the attachment of RNA polymerase to specific initiation sites and are then released. This sigma factor is the primary sigma factor during exponential growth. The protein is RNA polymerase sigma factor RpoD of Shewanella violacea (strain JCM 10179 / CIP 106290 / LMG 19151 / DSS12).